The chain runs to 143 residues: Nucleoside diphosphate kinase (143 aa).

ATP is bound by residues Lys-11, Phe-59, Arg-87, Thr-93, Arg-104, and Asn-114. His-117 serves as the catalytic Pros-phosphohistidine intermediate.

This sequence belongs to the NDK family. In terms of assembly, homotetramer. Mg(2+) serves as cofactor.

It is found in the cytoplasm. It carries out the reaction a 2'-deoxyribonucleoside 5'-diphosphate + ATP = a 2'-deoxyribonucleoside 5'-triphosphate + ADP. It catalyses the reaction a ribonucleoside 5'-diphosphate + ATP = a ribonucleoside 5'-triphosphate + ADP. Functionally, major role in the synthesis of nucleoside triphosphates other than ATP. The ATP gamma phosphate is transferred to the NDP beta phosphate via a ping-pong mechanism, using a phosphorylated active-site intermediate. The chain is Nucleoside diphosphate kinase from Nitrosococcus oceani (strain ATCC 19707 / BCRC 17464 / JCM 30415 / NCIMB 11848 / C-107).